Consider the following 225-residue polypeptide: Urease accessory protein UreG (225 aa).

Residues 1–21 (MHLDHHHESAAAVSADARRPD) form a disordered region. 33–40 (GPVGSGKT) contributes to the GTP binding site.

This sequence belongs to the SIMIBI class G3E GTPase family. UreG subfamily. As to quaternary structure, homodimer. UreD, UreF and UreG form a complex that acts as a GTP-hydrolysis-dependent molecular chaperone, activating the urease apoprotein by helping to assemble the nickel containing metallocenter of UreC. The UreE protein probably delivers the nickel.

The protein resides in the cytoplasm. Facilitates the functional incorporation of the urease nickel metallocenter. This process requires GTP hydrolysis, probably effectuated by UreG. The protein is Urease accessory protein UreG of Streptomyces coelicolor (strain ATCC BAA-471 / A3(2) / M145).